A 675-amino-acid chain; its full sequence is Methionine--tRNA ligase (675 aa).

The 'HIGH' region signature appears at 15 to 25; sequence PYANGSIHLGH. Zn(2+) is bound by residues cysteine 146, cysteine 149, cysteine 159, and cysteine 162. Residues 331–335 carry the 'KMSKS' region motif; the sequence is KMSKS. Lysine 334 contacts ATP. In terms of domain architecture, tRNA-binding spans 574-675; sequence DFAKIDLRIA…EGAQPGMKVK (102 aa).

It belongs to the class-I aminoacyl-tRNA synthetase family. MetG type 1 subfamily. In terms of assembly, homodimer. Requires Zn(2+) as cofactor.

The protein localises to the cytoplasm. It catalyses the reaction tRNA(Met) + L-methionine + ATP = L-methionyl-tRNA(Met) + AMP + diphosphate. Is required not only for elongation of protein synthesis but also for the initiation of all mRNA translation through initiator tRNA(fMet) aminoacylation. The protein is Methionine--tRNA ligase of Pseudoalteromonas atlantica (strain T6c / ATCC BAA-1087).